A 380-amino-acid chain; its full sequence is MKNISLLGASGSIGTQTLDVLRSHPDQFRLVAFSVGKNIDYAVKVIQEFSPQIVSVQREEDVLKLQAVSGNTKIVYGSEGLLEVALHPDAEIVVNAVVGSVGLLPTLRAIEAKKTIGIANKETLVTAGHLVMEAARKHNVSLLPVDSEHSAIFQCLNGENEKRISRLIITASGGSFRDKTRDELHHVTVEDALRHPNWSMGSKITIDSATMMNKGLEVIEAHWLFGIPYEQIDVVLHKESIIHSMVEFEDRSVMAQLGSPDMRVPIQYALTYPDRLPLSDTKQLNLWEMGTLHFEKMNQERFRCLRFAYEAGKTGGSMPAVMNAANEVAVEAFLQKRIGFLTVEDLIEKAMNHHNVIARPSLEEILEIDAATRRFVMEQI.

NADPH is bound by residues Ser10, Gly11, Ser12, Ile13, Gly36, Lys37, Asn38, and Asn120. Lys121 provides a ligand contact to 1-deoxy-D-xylulose 5-phosphate. Position 122 (Glu122) interacts with NADPH. Mn(2+) is bound at residue Asp146. 4 residues coordinate 1-deoxy-D-xylulose 5-phosphate: Ser147, Glu148, Ser172, and His195. Glu148 provides a ligand contact to Mn(2+). NADPH is bound at residue Gly201. Residues Ser208, Asn213, Lys214, and Glu217 each contribute to the 1-deoxy-D-xylulose 5-phosphate site. Glu217 serves as a coordination point for Mn(2+).

This sequence belongs to the DXR family. The cofactor is Mg(2+). Mn(2+) serves as cofactor.

The catalysed reaction is 2-C-methyl-D-erythritol 4-phosphate + NADP(+) = 1-deoxy-D-xylulose 5-phosphate + NADPH + H(+). It functions in the pathway isoprenoid biosynthesis; isopentenyl diphosphate biosynthesis via DXP pathway; isopentenyl diphosphate from 1-deoxy-D-xylulose 5-phosphate: step 1/6. Catalyzes the NADPH-dependent rearrangement and reduction of 1-deoxy-D-xylulose-5-phosphate (DXP) to 2-C-methyl-D-erythritol 4-phosphate (MEP). The sequence is that of 1-deoxy-D-xylulose 5-phosphate reductoisomerase from Bacillus cereus (strain AH187).